Consider the following 312-residue polypeptide: MNGDIAVFAGNSNKQIAEEICTHLGIQSGKINLKKFSDGEISVKIEDNVRGKEVFIVQSTSAPANDHLMELILIMDALRRASVSSISVVIPYYGYGRQDRKVEPRVPISARVVADLIEVVGLDRILTMDLHADQIQGFFRVPVDNLHFAPVLAEYVNTKKIDDLVIVSPDSGGAERARAFGKKVNGSLAIIDKRRPKANVSEVMNVIGEIEGKNCILLDDMIDTAGTICKAADVLLKHGAKSVYCAATHGVLSGEAVDRINSTQFSEVVLANTIAIPESKKINKLKSLSVAPLFANAIQRIHTNQSVSTLFD.

ATP is bound by residues 38–40 and 97–98; these read DGE and RQ. Mg(2+) is bound by residues His-131 and Asp-170. Lys-193 is a catalytic residue. D-ribose 5-phosphate contacts are provided by residues Arg-195, Asp-219, and 223–227; that span reads DTAGT.

It belongs to the ribose-phosphate pyrophosphokinase family. Class I subfamily. Homohexamer. Mg(2+) is required as a cofactor.

The protein resides in the cytoplasm. The enzyme catalyses D-ribose 5-phosphate + ATP = 5-phospho-alpha-D-ribose 1-diphosphate + AMP + H(+). It participates in metabolic intermediate biosynthesis; 5-phospho-alpha-D-ribose 1-diphosphate biosynthesis; 5-phospho-alpha-D-ribose 1-diphosphate from D-ribose 5-phosphate (route I): step 1/1. Its function is as follows. Involved in the biosynthesis of the central metabolite phospho-alpha-D-ribosyl-1-pyrophosphate (PRPP) via the transfer of pyrophosphoryl group from ATP to 1-hydroxyl of ribose-5-phosphate (Rib-5-P). The protein is Ribose-phosphate pyrophosphokinase of Leptospira interrogans serogroup Icterohaemorrhagiae serovar copenhageni (strain Fiocruz L1-130).